The primary structure comprises 186 residues: Nicotinamide-nucleotide adenylyltransferase (186 aa).

The protein belongs to the archaeal NMN adenylyltransferase family.

Its subcellular location is the cytoplasm. The enzyme catalyses beta-nicotinamide D-ribonucleotide + ATP + H(+) = diphosphate + NAD(+). Its pathway is cofactor biosynthesis; NAD(+) biosynthesis; NAD(+) from nicotinamide D-ribonucleotide: step 1/1. The sequence is that of Nicotinamide-nucleotide adenylyltransferase from Pyrococcus horikoshii (strain ATCC 700860 / DSM 12428 / JCM 9974 / NBRC 100139 / OT-3).